An 829-amino-acid polypeptide reads, in one-letter code: High affinity cAMP-specific and IBMX-insensitive 3',5'-cyclic phosphodiesterase 8A (829 aa).

The interval 16–46 is disordered; it reads EDAPSPAAPPLSSGGPRLPQGQKTAALPRTR. Ser20 is subject to Phosphoserine. Positions 213 to 283 constitute a PAS domain; the sequence is ACNSVFTALE…DTINSCIRIG (71 aa). The PAC domain maps to 287 to 329; the sequence is QGIYYAKKKNGDNIQQNVKIIPVIGQGGKIRHYVSIIRVCNGN. Positions 341–360 are disordered; sequence SDTHTDNQTGKHKDRRKGSL. Phosphoserine; by PKA is present on Ser359. Residues Ser386 and Ser457 each carry the phosphoserine modification. The tract at residues 454-461 is involved in RAF1-binding; that stretch reads RRLSGNEY. Position 461 is a phosphotyrosine (Tyr461). Residues 480–820 form the PDEase domain; sequence SLDDVPPRIA…KYWKGLDEMK (341 aa). Catalysis depends on His556, which acts as the Proton donor. Residues His560, His596, Asp597, and Asp726 each coordinate a divalent metal cation.

This sequence belongs to the cyclic nucleotide phosphodiesterase family. PDE8 subfamily. As to quaternary structure, interacts with RAF1. The interaction promotes RAF1 activity. A divalent metal cation is required as a cofactor. In terms of processing, phosphorylated at Ser-359 by PKA under elevated cAMP conditions, this enhances catalytic activity. In terms of tissue distribution, expressed in most tissues except thymus and peripheral blood leukocytes. Highest levels in testis, ovary, small intestine and colon.

The enzyme catalyses 3',5'-cyclic AMP + H2O = AMP + H(+). It functions in the pathway purine metabolism; 3',5'-cyclic AMP degradation; AMP from 3',5'-cyclic AMP: step 1/1. Inhibited by dipyridimole. Insensitive to selective PDE inhibitors including rolipram and zaprinast as well as to the non-selective inhibitor, IBMX. Unaffected by cGMP. Its function is as follows. Hydrolyzes the second messenger cAMP, which is a key regulator of many important physiological processes. May be involved in maintaining basal levels of the cyclic nucleotide and/or in the cAMP regulation of germ cell development. Binding to RAF1 reduces RAF1 'Ser-259' inhibitory-phosphorylation and stimulates RAF1-dependent EGF-activated ERK-signaling. Protects against cell death induced by hydrogen peroxide and staurosporine. This chain is High affinity cAMP-specific and IBMX-insensitive 3',5'-cyclic phosphodiesterase 8A (PDE8A), found in Homo sapiens (Human).